The following is a 96-amino-acid chain: Cell division protein FtsB (96 aa).

Topologically, residues Met-1 to Ile-11 are cytoplasmic. A helical membrane pass occupies residues Phe-12–Phe-29. Topologically, residues Ser-30–Lys-96 are periplasmic.

It belongs to the FtsB family. As to quaternary structure, part of a complex composed of FtsB, FtsL and FtsQ.

The protein resides in the cell inner membrane. Its function is as follows. Essential cell division protein. May link together the upstream cell division proteins, which are predominantly cytoplasmic, with the downstream cell division proteins, which are predominantly periplasmic. The chain is Cell division protein FtsB from Francisella tularensis subsp. tularensis (strain SCHU S4 / Schu 4).